The primary structure comprises 274 residues: Large ribosomal subunit protein uL2cz/uL2cy (274 aa).

Disordered stretches follow at residues 1–25 (MAIH…VKSN) and 223–274 (MNPV…RRTK).

The protein belongs to the universal ribosomal protein uL2 family. As to quaternary structure, part of the 50S ribosomal subunit.

The protein resides in the plastid. It localises to the chloroplast. The protein is Large ribosomal subunit protein uL2cz/uL2cy (rpl2-A) of Citrus sinensis (Sweet orange).